The primary structure comprises 287 residues: Transcription cofactor vestigial-like protein 4 (287 aa).

2 disordered regions span residues 44–68 (ASAL…SMEP) and 251–287 (AAKD…SVVS). A phosphoserine mark is found at serine 58 and serine 271. The span at 275–287 (HMVSHSHSPSVVS) shows a compositional bias: low complexity.

It belongs to the vestigial family. As to quaternary structure, interacts with TEFs. Interacts with IRF2BP2.

It is found in the nucleus. In terms of biological role, may act as a specific coactivator for the mammalian TEFs. This chain is Transcription cofactor vestigial-like protein 4 (Vgll4), found in Mus musculus (Mouse).